A 252-amino-acid chain; its full sequence is Imidazole glycerol phosphate synthase subunit HisF (252 aa).

Catalysis depends on residues Asp12 and Asp131.

The protein belongs to the HisA/HisF family. In terms of assembly, heterodimer of HisH and HisF.

It is found in the cytoplasm. It carries out the reaction 5-[(5-phospho-1-deoxy-D-ribulos-1-ylimino)methylamino]-1-(5-phospho-beta-D-ribosyl)imidazole-4-carboxamide + L-glutamine = D-erythro-1-(imidazol-4-yl)glycerol 3-phosphate + 5-amino-1-(5-phospho-beta-D-ribosyl)imidazole-4-carboxamide + L-glutamate + H(+). It participates in amino-acid biosynthesis; L-histidine biosynthesis; L-histidine from 5-phospho-alpha-D-ribose 1-diphosphate: step 5/9. IGPS catalyzes the conversion of PRFAR and glutamine to IGP, AICAR and glutamate. The HisF subunit catalyzes the cyclization activity that produces IGP and AICAR from PRFAR using the ammonia provided by the HisH subunit. This chain is Imidazole glycerol phosphate synthase subunit HisF, found in Thermus thermophilus (strain ATCC BAA-163 / DSM 7039 / HB27).